The primary structure comprises 456 residues: tRNA modification GTPase MnmE (456 aa).

(6S)-5-formyl-5,6,7,8-tetrahydrofolate is bound by residues Arg-23, Glu-85, and Arg-124. The TrmE-type G domain occupies 220-375; that stretch reads GLRVLIFGKP…LVSAIQERFV (156 aa). Residue Asn-230 coordinates K(+). Residues 230 to 235, 249 to 255, and 274 to 277 contribute to the GTP site; these read NVGKSS, TDIPGTT, and DTAG. Ser-234 is a Mg(2+) binding site. K(+)-binding residues include Thr-249, Ile-251, and Thr-254. Thr-255 is a Mg(2+) binding site. Lys-456 is a (6S)-5-formyl-5,6,7,8-tetrahydrofolate binding site.

The protein belongs to the TRAFAC class TrmE-Era-EngA-EngB-Septin-like GTPase superfamily. TrmE GTPase family. Homodimer. Heterotetramer of two MnmE and two MnmG subunits. K(+) is required as a cofactor.

Its subcellular location is the cytoplasm. Exhibits a very high intrinsic GTPase hydrolysis rate. Involved in the addition of a carboxymethylaminomethyl (cmnm) group at the wobble position (U34) of certain tRNAs, forming tRNA-cmnm(5)s(2)U34. This is tRNA modification GTPase MnmE from Syntrophotalea carbinolica (strain DSM 2380 / NBRC 103641 / GraBd1) (Pelobacter carbinolicus).